The following is a 498-amino-acid chain: MPKILSYNVFFKSMLTDPVYNYCKPIIKNNGLEYTTCLYNVSKFIASQKDLDFVLLQEATNWKTLQKITLNLSQMETISTCFDVEIIVTFYNKQKYQLDPIDNMFIGYMDSVNRPFHVLFFQNNICLINLHAGHKGDIYFLDKYLVRSLKKLDNYQKFIDKLTTYDIIIGGDFNDELKIDFYILSDNFFGISEGRRLYGNTFEPSCCNPVLNYLGRTKKSYDHILSTLNDNVSTVIPVVKASDHMPIISTITKNIGFDFDGVLHLDVNKPDYEGQRNPYNLIGPYNIFNNIINLILKEILDNNNVYIITARKDTKVNRSVINSHLKKTILKNYINKIPILFSGGKDKTLLLTKYNINTFYDDSCLRINELFLSKILGNLSNLNQLYFVDPDNQSYQLVTKQNINKLCGNFINKNIISLLDQSDNTHNNSNIKLISTFIDFNHNYQFRNPDINYLMKELNDIINENNLDYHQIDYIDKLQDSIVKMIIKELKQNINNLK.

This is an uncharacterized protein from Acanthamoeba polyphaga (Amoeba).